An 88-amino-acid polypeptide reads, in one-letter code: Small ribosomal subunit protein uS15 (88 aa).

The protein belongs to the universal ribosomal protein uS15 family. In terms of assembly, part of the 30S ribosomal subunit. Forms a bridge to the 50S subunit in the 70S ribosome, contacting the 23S rRNA.

Functionally, one of the primary rRNA binding proteins, it binds directly to 16S rRNA where it helps nucleate assembly of the platform of the 30S subunit by binding and bridging several RNA helices of the 16S rRNA. Its function is as follows. Forms an intersubunit bridge (bridge B4) with the 23S rRNA of the 50S subunit in the ribosome. The protein is Small ribosomal subunit protein uS15 of Flavobacterium psychrophilum (strain ATCC 49511 / DSM 21280 / CIP 103535 / JIP02/86).